Consider the following 184-residue polypeptide: ATP synthase subunit b, chloroplastic (184 aa).

The chain crosses the membrane as a helical span at residues 27-49; it reads LATNLINLSVVLGVLIFFGKGVL.

The protein belongs to the ATPase B chain family. As to quaternary structure, F-type ATPases have 2 components, F(1) - the catalytic core - and F(0) - the membrane proton channel. F(1) has five subunits: alpha(3), beta(3), gamma(1), delta(1), epsilon(1). F(0) has four main subunits: a(1), b(1), b'(1) and c(10-14). The alpha and beta chains form an alternating ring which encloses part of the gamma chain. F(1) is attached to F(0) by a central stalk formed by the gamma and epsilon chains, while a peripheral stalk is formed by the delta, b and b' chains.

It is found in the plastid. It localises to the chloroplast thylakoid membrane. In terms of biological role, f(1)F(0) ATP synthase produces ATP from ADP in the presence of a proton or sodium gradient. F-type ATPases consist of two structural domains, F(1) containing the extramembraneous catalytic core and F(0) containing the membrane proton channel, linked together by a central stalk and a peripheral stalk. During catalysis, ATP synthesis in the catalytic domain of F(1) is coupled via a rotary mechanism of the central stalk subunits to proton translocation. Functionally, component of the F(0) channel, it forms part of the peripheral stalk, linking F(1) to F(0). The sequence is that of ATP synthase subunit b, chloroplastic from Nymphaea alba (White water-lily).